The sequence spans 490 residues: Cobyric acid synthase (490 aa).

Residues 252-439 form the GATase cobBQ-type domain; sequence RLKVVVPVLP…LHGLFESTAA (188 aa). Cys333 functions as the Nucleophile in the catalytic mechanism. His431 is a catalytic residue.

The protein belongs to the CobB/CobQ family. CobQ subfamily.

It functions in the pathway cofactor biosynthesis; adenosylcobalamin biosynthesis. Its function is as follows. Catalyzes amidations at positions B, D, E, and G on adenosylcobyrinic A,C-diamide. NH(2) groups are provided by glutamine, and one molecule of ATP is hydrogenolyzed for each amidation. This is Cobyric acid synthase from Pseudomonas paraeruginosa (strain DSM 24068 / PA7) (Pseudomonas aeruginosa (strain PA7)).